Here is a 280-residue protein sequence, read N- to C-terminus: UDP-3-O-acyl-N-acetylglucosamine deacetylase (280 aa).

3 residues coordinate Zn(2+): histidine 79, histidine 237, and aspartate 241. Residue histidine 264 is the Proton donor of the active site.

The protein belongs to the LpxC family. Zn(2+) serves as cofactor.

It catalyses the reaction a UDP-3-O-[(3R)-3-hydroxyacyl]-N-acetyl-alpha-D-glucosamine + H2O = a UDP-3-O-[(3R)-3-hydroxyacyl]-alpha-D-glucosamine + acetate. The protein operates within glycolipid biosynthesis; lipid IV(A) biosynthesis; lipid IV(A) from (3R)-3-hydroxytetradecanoyl-[acyl-carrier-protein] and UDP-N-acetyl-alpha-D-glucosamine: step 2/6. Catalyzes the hydrolysis of UDP-3-O-myristoyl-N-acetylglucosamine to form UDP-3-O-myristoylglucosamine and acetate, the committed step in lipid A biosynthesis. This chain is UDP-3-O-acyl-N-acetylglucosamine deacetylase, found in Chlamydia felis (strain Fe/C-56) (Chlamydophila felis).